The primary structure comprises 658 residues: Carnitine O-palmitoyltransferase 2, mitochondrial (658 aa).

A mitochondrion-targeting transit peptide spans 1 to 25; the sequence is MVPRLLLRAWPRGPAVGPGAPSRPL. The Mitochondrial matrix segment spans residues 26-178; that stretch reads SAGSGPGQYL…GLLEPEVFHL (153 aa). Lys-69 carries the post-translational modification N6-succinyllysine. An N6-acetyllysine modification is found at Lys-79. Residue Lys-85 is modified to N6-succinyllysine. Positions 179–208 form an intramembrane region, note=Mitochondrial inner membrane; it reads NPAKSDTITFKRLIRFVPSSLSWYGAYLVN. The Mitochondrial matrix segment spans residues 209–658; that stretch reads AYPLDMSQYF…DALEGKSIKS (450 aa). Lys-239 carries the N6-acetyllysine; alternate modification. An N6-succinyllysine; alternate modification is found at Lys-239. Lys-305 is subject to N6-acetyllysine. His-372 acts as the Proton acceptor in catalysis. Lys-424 and Lys-439 each carry N6-succinyllysine. 452–464 contributes to the CoA binding site; that stretch reads GKEFLKKQKLSPD. Residues Tyr-486, Ser-488, and Thr-499 each coordinate (R)-carnitine. 2 positions are modified to N6-acetyllysine; alternate: Lys-510 and Lys-544. An N6-succinyllysine; alternate mark is found at Lys-510 and Lys-544.

This sequence belongs to the carnitine/choline acetyltransferase family.

It is found in the mitochondrion inner membrane. It carries out the reaction (R)-carnitine + hexadecanoyl-CoA = O-hexadecanoyl-(R)-carnitine + CoA. The enzyme catalyses octanoyl-CoA + (R)-carnitine = O-octanoyl-(R)-carnitine + CoA. It catalyses the reaction decanoyl-CoA + (R)-carnitine = O-decanoyl-(R)-carnitine + CoA. The catalysed reaction is dodecanoyl-CoA + (R)-carnitine = O-dodecanoyl-R-carnitine + CoA. It carries out the reaction tetradecanoyl-CoA + (R)-carnitine = O-tetradecanoyl-(R)-carnitine + CoA. The enzyme catalyses (R)-carnitine + octadecanoyl-CoA = O-octadecanoyl-(R)-carnitine + CoA. It catalyses the reaction eicosanoyl-CoA + (R)-carnitine = O-eicosanoyl-(R)-carnitine + CoA. The catalysed reaction is (9Z)-tetradecenoyl-CoA + (R)-carnitine = O-(9Z)-tetradecenoyl-(R)-carnitine + CoA. It carries out the reaction (5Z)-tetradecenoyl-CoA + (R)-carnitine = O-(5Z)-tetradecenoyl-(R)-carnitine + CoA. The enzyme catalyses (R)-carnitine + (9Z)-octadecenoyl-CoA = O-(9Z)-octadecenoyl-(R)-carnitine + CoA. It catalyses the reaction 4,8-dimethylnonanoyl-CoA + (R)-carnitine = O-4,8-dimethylnonanoyl-(R)-carnitine + CoA. It participates in lipid metabolism; fatty acid beta-oxidation. With respect to regulation, inhibited by trans-2-hexadecanoyl-CoA. Involved in the intramitochondrial synthesis of acylcarnitines from accumulated acyl-CoA metabolites. Reconverts acylcarnitines back into the respective acyl-CoA esters that can then undergo beta-oxidation, an essential step for the mitochondrial uptake of long-chain fatty acids and their subsequent beta-oxidation in the mitochondrion. Active with medium (C8-C12) and long-chain (C14-C18) acyl-CoA esters. The polypeptide is Carnitine O-palmitoyltransferase 2, mitochondrial (Homo sapiens (Human)).